A 174-amino-acid polypeptide reads, in one-letter code: Secretion monitor (174 aa).

The signal sequence occupies residues 1-35; it reads MGILNLWRQFGRRYFWSHLLLGVVAASIGAPTILA.

The protein belongs to the SecM family.

The protein resides in the cytoplasm. It localises to the cytosol. The protein localises to the periplasm. In terms of biological role, regulates secA expression by translational coupling of the secM secA operon. Translational pausing at a specific Pro residue 5 residues before the end of the protein may allow disruption of a mRNA repressor helix that normally suppresses secA translation initiation. The polypeptide is Secretion monitor (Photorhabdus laumondii subsp. laumondii (strain DSM 15139 / CIP 105565 / TT01) (Photorhabdus luminescens subsp. laumondii)).